Consider the following 264-residue polypeptide: Undecaprenyl-diphosphatase (264 aa).

8 consecutive transmembrane segments (helical) span residues 7–27, 41–61, 89–109, 114–134, 144–164, 186–206, 219–239, and 244–264; these read IVLALIQGLSEFLPISSSAHL, LIFDVVVHMGTLSAVIFYYQA, VLLGTIPIGLVGMIFKDFVAV, IEIIAYTTLVFGLLLGFASWF, TISWIDVSFVSMMQILALIPG, IQFSFLLSIPVITLSLILMLI, LLVLGFVISTISAYATIIFVI, and MVGMTPFVIYRLILGVFLFFL.

Belongs to the UppP family.

Its subcellular location is the cell inner membrane. It catalyses the reaction di-trans,octa-cis-undecaprenyl diphosphate + H2O = di-trans,octa-cis-undecaprenyl phosphate + phosphate + H(+). Functionally, catalyzes the dephosphorylation of undecaprenyl diphosphate (UPP). Confers resistance to bacitracin. This Vesicomyosocius okutanii subsp. Calyptogena okutanii (strain HA) protein is Undecaprenyl-diphosphatase.